We begin with the raw amino-acid sequence, 362 residues long: Glutaminyl-peptide cyclotransferase (362 aa).

The signal sequence occupies residues 1–35 (MAGSEDKRVVGTLHLLLLQATVLSLTAGNLSLVSA). 2 N-linked (GlcNAc...) asparagine glycosylation sites follow: asparagine 29 and asparagine 50. A disulfide bridge links cysteine 140 with cysteine 165. Aspartate 160 is a Zn(2+) binding site. Glutamate 202 acts as the Proton acceptor in catalysis. Glutamate 203 contributes to the Zn(2+) binding site. Aspartate 249 (proton acceptor) is an active-site residue. Histidine 331 serves as a coordination point for Zn(2+).

This sequence belongs to the glutaminyl-peptide cyclotransferase family.

The protein resides in the secreted. It carries out the reaction N-terminal L-glutaminyl-[peptide] = N-terminal 5-oxo-L-prolyl-[peptide] + NH4(+). Responsible for the biosynthesis of pyroglutamyl peptides. Has a bias against acidic and tryptophan residues adjacent to the N-terminal glutaminyl residue and a lack of importance of chain length after the second residue. The protein is Glutaminyl-peptide cyclotransferase (Qpct) of Mus musculus (Mouse).